The primary structure comprises 143 residues: uncharacterized protein (143 aa).

The disordered stretch occupies residues 1–21; the sequence is MAAMDTGQRADPSNPGDKEGD.

This is an uncharacterized protein from Homo sapiens (Human).